A 1228-amino-acid polypeptide reads, in one-letter code: Nitrate reductase alpha chain (1228 aa).

The 65-residue stretch at 47 to 111 (DKVVRSTHGV…SFSWYIYSPL (65 aa)) folds into the 4Fe-4S Mo/W bis-MGD-type domain. [4Fe-4S] cluster-binding residues include histidine 54, cysteine 58, cysteine 62, and cysteine 97. Aspartate 227 is a Mo-bis(molybdopterin guanine dinucleotide) binding site.

The protein belongs to the prokaryotic molybdopterin-containing oxidoreductase family. [4Fe-4S] cluster serves as cofactor. The cofactor is Mo-bis(molybdopterin guanine dinucleotide).

The protein resides in the cell membrane. It carries out the reaction nitrate + a quinol = a quinone + nitrite + H2O. In terms of biological role, the alpha chain is the actual site of nitrate reduction. The chain is Nitrate reductase alpha chain (narG) from Bacillus subtilis (strain 168).